A 319-amino-acid polypeptide reads, in one-letter code: Probable cytochrome c oxidase subunit 2 (319 aa).

A signal peptide spans 1-33 (MSPNGSDRSPRRPMRRKLLQALTAGLVLATATG). 2 helical membrane passes run 63–83 (WAAA…ATIF) and 101–121 (MPIE…LFYF). Residues histidine 227, cysteine 262, cysteine 266, and histidine 270 each coordinate Cu cation.

Belongs to the cytochrome c oxidase subunit 2 family. The cofactor is Cu cation. Heme serves as cofactor.

It localises to the cell membrane. It carries out the reaction 4 Fe(II)-[cytochrome c] + O2 + 8 H(+)(in) = 4 Fe(III)-[cytochrome c] + 2 H2O + 4 H(+)(out). Its function is as follows. Subunits I and II form the functional core of the enzyme complex. Electrons originating in cytochrome c are transferred via heme a and Cu(A) to the binuclear center formed by heme a3 and Cu(B). In Streptomyces avermitilis (strain ATCC 31267 / DSM 46492 / JCM 5070 / NBRC 14893 / NCIMB 12804 / NRRL 8165 / MA-4680), this protein is Probable cytochrome c oxidase subunit 2 (ctaC).